Consider the following 158-residue polypeptide: 6,7-dimethyl-8-ribityllumazine synthase (158 aa).

Residues Phe-24, 58-60 (AFE), and 82-84 (AVI) each bind 5-amino-6-(D-ribitylamino)uracil. 87–88 (GT) provides a ligand contact to (2S)-2-hydroxy-3-oxobutyl phosphate. Residue His-90 is the Proton donor of the active site. Phe-115 serves as a coordination point for 5-amino-6-(D-ribitylamino)uracil. Arg-129 serves as a coordination point for (2S)-2-hydroxy-3-oxobutyl phosphate.

It belongs to the DMRL synthase family. As to quaternary structure, forms an icosahedral capsid composed of 60 subunits, arranged as a dodecamer of pentamers.

The enzyme catalyses (2S)-2-hydroxy-3-oxobutyl phosphate + 5-amino-6-(D-ribitylamino)uracil = 6,7-dimethyl-8-(1-D-ribityl)lumazine + phosphate + 2 H2O + H(+). It functions in the pathway cofactor biosynthesis; riboflavin biosynthesis; riboflavin from 2-hydroxy-3-oxobutyl phosphate and 5-amino-6-(D-ribitylamino)uracil: step 1/2. In terms of biological role, catalyzes the formation of 6,7-dimethyl-8-ribityllumazine by condensation of 5-amino-6-(D-ribitylamino)uracil with 3,4-dihydroxy-2-butanone 4-phosphate. This is the penultimate step in the biosynthesis of riboflavin. The sequence is that of 6,7-dimethyl-8-ribityllumazine synthase from Stutzerimonas stutzeri (strain A1501) (Pseudomonas stutzeri).